The following is a 204-amino-acid chain: Putative rubrerythrin (204 aa).

One can recognise a Ferritin-like diiron domain in the interval 1-159 (MINNFFVINM…KLLKEVEEGT (159 aa)). Glu24, Glu57, Glu107, Glu110, Glu141, His144, Cys171, Cys174, Cys187, and Cys190 together coordinate Fe(3+). The Rubredoxin-like domain occupies 166–204 (PVEWVCRKCGFVHLGKEPPEKCPSCSHPRKYFEVKCEKY).

As to quaternary structure, homodimer. Possesses two rubredoxin-like centers and two non-sulfur oxo-bridged di-iron centers per dimer. Fe(3+) is required as a cofactor.

Its subcellular location is the cytoplasm. Its function is as follows. May provide oxidative stress protection via catalytic reduction of intracellular hydrogen peroxide. This chain is Putative rubrerythrin, found in Methanocaldococcus jannaschii (strain ATCC 43067 / DSM 2661 / JAL-1 / JCM 10045 / NBRC 100440) (Methanococcus jannaschii).